The following is a 188-amino-acid chain: Pyridoxal 5'-phosphate synthase subunit PdxT (188 aa).

L-glutamine is bound at residue 46 to 48; it reads GES. Residue cysteine 78 is the Nucleophile of the active site. Residues arginine 105 and 134–135 each bind L-glutamine; that span reads IR. Active-site charge relay system residues include histidine 170 and glutamate 172.

This sequence belongs to the glutaminase PdxT/SNO family. As to quaternary structure, in the presence of PdxS, forms a dodecamer of heterodimers. Only shows activity in the heterodimer.

The catalysed reaction is aldehydo-D-ribose 5-phosphate + D-glyceraldehyde 3-phosphate + L-glutamine = pyridoxal 5'-phosphate + L-glutamate + phosphate + 3 H2O + H(+). It catalyses the reaction L-glutamine + H2O = L-glutamate + NH4(+). The protein operates within cofactor biosynthesis; pyridoxal 5'-phosphate biosynthesis. In terms of biological role, catalyzes the hydrolysis of glutamine to glutamate and ammonia as part of the biosynthesis of pyridoxal 5'-phosphate. The resulting ammonia molecule is channeled to the active site of PdxS. The polypeptide is Pyridoxal 5'-phosphate synthase subunit PdxT (Clostridium kluyveri (strain ATCC 8527 / DSM 555 / NBRC 12016 / NCIMB 10680 / K1)).